The primary structure comprises 192 residues: Peptidyl-tRNA hydrolase (192 aa).

Tyr-17 contributes to the tRNA binding site. His-22 functions as the Proton acceptor in the catalytic mechanism. TRNA-binding residues include Phe-68, Asn-70, and Asn-116.

Belongs to the PTH family. In terms of assembly, monomer.

The protein localises to the cytoplasm. It carries out the reaction an N-acyl-L-alpha-aminoacyl-tRNA + H2O = an N-acyl-L-amino acid + a tRNA + H(+). Hydrolyzes ribosome-free peptidyl-tRNAs (with 1 or more amino acids incorporated), which drop off the ribosome during protein synthesis, or as a result of ribosome stalling. Functionally, catalyzes the release of premature peptidyl moieties from peptidyl-tRNA molecules trapped in stalled 50S ribosomal subunits, and thus maintains levels of free tRNAs and 50S ribosomes. The chain is Peptidyl-tRNA hydrolase from Buchnera aphidicola subsp. Cinara cedri (strain Cc).